A 369-amino-acid chain; its full sequence is FAD-dependent monooxygenase FPY4 (369 aa).

This sequence belongs to the aromatic-ring hydroxylase family. The cofactor is FAD.

The protein operates within secondary metabolite biosynthesis. Its function is as follows. FAD-dependent monooxygenase; part of the gene cluster that mediates the biosynthesis of the gamma-pyrones fusapyrone (FPY) and deoxyfusapyrone (dFPY). FPY is an undecaketide and thus likely synthesized by the polyketide synthase FPY1 from acetyl-CoA functioning as starter unit and the addition of 10 malonyl-CoA extender units by successive Claisen-condensations. Next to this, FPY shares some rare features: C-glycosylated 4-deoxyglucose at C-3, a gem-dimethyl group at C-13, and an alpha-beta to beta-gamma double bond shift at C-20. During FPY biosynthesis mono-C-methyl groups are transferred to the tetra-, penta-, hexa- and heptaketide, while two C-methyl groups are transferred to the nonaketide, suggesting that the CMet domain is programmed to selectively catalyze two successive C-alpha-methylation reactions of the nonaketide, while other alpha-carbons are non- or mono-methylated only. While the origin of the 4'-deoxyglucose moiety remains opaque, its transfer to C-3 is most likely mediated by the C-glycosyltransferase FPY2. Next to this, the hydroxyl group present at C-33 and discriminating between FPY and dFPY, is likely to be installed by the cytochrome P450 monooxygenase FPY7. No putative function can be predicted for the remaining genes FPY3-FPY6. The sequence is that of FAD-dependent monooxygenase FPY4 from Fusarium mangiferae (Mango malformation disease fungus).